A 172-amino-acid chain; its full sequence is Protein-export protein SecB (172 aa).

This sequence belongs to the SecB family. Homotetramer, a dimer of dimers. One homotetramer interacts with 1 SecA dimer.

The protein resides in the cytoplasm. Functionally, one of the proteins required for the normal export of preproteins out of the cell cytoplasm. It is a molecular chaperone that binds to a subset of precursor proteins, maintaining them in a translocation-competent state. It also specifically binds to its receptor SecA. The chain is Protein-export protein SecB from Maricaulis maris (strain MCS10) (Caulobacter maris).